We begin with the raw amino-acid sequence, 43 residues long: Protein PsbN (43 aa).

The helical transmembrane segment at 7–27 threads the bilayer; it reads VAIFISGLLVSFTGYALYTAF.

The protein belongs to the PsbN family.

It localises to the plastid. Its subcellular location is the chloroplast thylakoid membrane. May play a role in photosystem I and II biogenesis. This is Protein PsbN from Sagittaria latifolia (Broadleaf arrowhead).